Here is a 145-residue protein sequence, read N- to C-terminus: MTLQRTFVMIKPDGVRRRLVGEIISRFEKRGFNILALKMVHMDRATAERLYQEHKGKGFFNELINYIISGPVVCMIIEGDDAVSVVRKMIGATDPKEASPGTIRGDYALSKSENVIHASDSEEKAKTEMGIFFQDVTEIGAQARM.

Positions 11, 59, 87, 93, 104, and 114 each coordinate ATP. His-117 acts as the Pros-phosphohistidine intermediate in catalysis.

It belongs to the NDK family. Mg(2+) serves as cofactor.

The protein localises to the cytoplasm. The catalysed reaction is a 2'-deoxyribonucleoside 5'-diphosphate + ATP = a 2'-deoxyribonucleoside 5'-triphosphate + ADP. The enzyme catalyses a ribonucleoside 5'-diphosphate + ATP = a ribonucleoside 5'-triphosphate + ADP. Functionally, major role in the synthesis of nucleoside triphosphates other than ATP. The ATP gamma phosphate is transferred to the NDP beta phosphate via a ping-pong mechanism, using a phosphorylated active-site intermediate. The sequence is that of Nucleoside diphosphate kinase from Sulfolobus acidocaldarius (strain ATCC 33909 / DSM 639 / JCM 8929 / NBRC 15157 / NCIMB 11770).